Reading from the N-terminus, the 270-residue chain is Probable feruloyl esterase C (270 aa).

Positions 1-21 are cleaved as a signal peptide; that stretch reads MIKSIILQAIMVLSTLTSVHG. A glycan (N-linked (GlcNAc...) asparagine) is linked at Asn23.

It belongs to the faeC family.

The protein resides in the secreted. The enzyme catalyses feruloyl-polysaccharide + H2O = ferulate + polysaccharide.. In terms of biological role, involved in degradation of plant cell walls. Hydrolyzes the feruloyl-arabinose ester bond in arabinoxylans, and the feruloyl-galactose ester bond in pectin. Active against paranitrophenyl-acetate, methyl ferulate and wheat arabinoxylan. This Aspergillus oryzae (strain ATCC 42149 / RIB 40) (Yellow koji mold) protein is Probable feruloyl esterase C (faeC).